Here is a 1040-residue protein sequence, read N- to C-terminus: Multidrug resistance protein MdtB (1040 aa).

12 helical membrane-spanning segments follow: residues 16–36 (FIMRPVATTLLMVAILLAGII), 347–367 (LMMAIALVVMIIYLFLRNIPA), 369–389 (IIPGVAVPLSLIGTFAVMVFL), 396–416 (LTLMALTIATGFVVDDAIVVI), 440–460 (IGFTIISLTFSLIAVLIPLLF), 472–492 (FAITLAVAILISAVVSLTLTP), 537–557 (WLTLSVALSTLLLSVLLWVFI), 863–883 (LGSTVWLIVAAVVAMYIVLGI), 888–908 (FIHPITILSTLPTAGVGALLA), 911–931 (IAGSELDVIAIIGIILLIGIV), 968–988 (ILMTTLAALLGALPLMLSTGV), and 998–1018 (IGMVGGLIVSQVLTLFTTPVI).

Belongs to the resistance-nodulation-cell division (RND) (TC 2.A.6) family. MdtB subfamily. In terms of assembly, part of a tripartite efflux system composed of MdtA, MdtB and MdtC. MdtB forms a heteromultimer with MdtC.

It is found in the cell inner membrane. Its function is as follows. The MdtABC tripartite complex confers resistance against novobiocin and deoxycholate. The polypeptide is Multidrug resistance protein MdtB (Escherichia coli O9:H4 (strain HS)).